Reading from the N-terminus, the 323-residue chain is Putative divalent cation/proton antiporter TMEM165 (323 aa).

The N-terminal stretch at 1–33 (MAASARGSGRAPTRRLLVLLLLPLLWAPAGVRA) is a signal peptide. Residues 34–88 (GPEEDLSHRNQEPPAPAQQLQPQPAAVQGLEPARAEKGFTPAAPVHTNREDAATQ) are Lumenal-facing. Positions 35 to 44 (PEEDLSHRNQ) are enriched in basic and acidic residues. A disordered region spans residues 35–60 (PEEDLSHRNQEPPAPAQQLQPQPAAV). The segment covering 50–59 (AQQLQPQPAA) has biased composition (low complexity). The chain crosses the membrane as a helical span at residues 89-109 (ANLGFIHAFVAAISVIIVSEL). The Cytoplasmic segment spans residues 110–126 (GDKTFFIAAIMAMRYNR). Residues 127–147 (LTVLAGAMLALALMTCLSVLF) form a helical membrane-spanning segment. Residues 148-151 (GYAT) lie on the Lumenal side of the membrane. A helical membrane pass occupies residues 152 to 172 (TVIPRVYTYYVSTALFAIFGI). Topologically, residues 173 to 227 (RMLREGLKMSPDEGQEELEEVQAELKKKDEEFQRTKLLNGPDVETGTSTAIPQKK) are cytoplasmic. Positions 184–211 (DEGQEELEEVQAELKKKDEEFQRTKLLN) form a coiled coil. Residues 228-248 (WLHFISPIFVQALTLTFLAEW) traverse the membrane as a helical segment. Residues 249–266 (GDRSQLTTIVLAAREDPY) lie on the Lumenal side of the membrane. A helical transmembrane segment spans residues 267 to 287 (GVAVGGTVGHCLCTGLAVIGG). Residues 288–298 (RMIAQKISVRT) are Cytoplasmic-facing. Residues 299 to 319 (VTIIGGIVFLAFAFSALFISP) traverse the membrane as a helical segment. At 320-323 (ESGF) the chain is on the lumenal side.

Belongs to the GDT1 family.

The protein resides in the golgi apparatus membrane. The catalysed reaction is Ca(2+)(in) + n H(+)(out) = Ca(2+)(out) + n H(+)(in). It carries out the reaction Mn(2+)(in) + n H(+)(out) = Mn(2+)(out) + n H(+)(in). Its function is as follows. Putative divalent cation:proton antiporter that exchanges calcium or manganese ions for protons across the Golgi membrane. Mediates the reversible transport of calcium or manganese to the Golgi lumen driven by the proton gradient and possibly the membrane potential generated by V-ATPase. Provides calcium or manganese cofactors to resident Golgi enzymes and contributes to the maintenance of an acidic luminal Golgi pH required for proper functioning of the secretory pathway. Promotes Ca(2+) storage within the Golgi lumen of the mammary epithelial cells to be then secreted into milk. The transport mechanism and stoichiometry remains to be elucidated. The polypeptide is Putative divalent cation/proton antiporter TMEM165 (Rattus norvegicus (Rat)).